Reading from the N-terminus, the 42-residue chain is Small, acid-soluble spore protein L (42 aa).

A disordered region spans residues 1–42 (MKKKDKGRLTGGVTPQGDLEGNTHNDPKTELEERAKKSNTKR). Over residues 21-36 (GNTHNDPKTELEERAK) the composition is skewed to basic and acidic residues.

The protein localises to the spore core. This is Small, acid-soluble spore protein L (sspL) from Bacillus subtilis (strain 168).